Consider the following 420-residue polypeptide: Synaptosomal-associated protein 47 (420 aa).

2 consecutive t-SNARE coiled-coil homology domains span residues alanine 110 to leucine 172 and threonine 357 to leucine 419. Residues alanine 338 to threonine 357 form a disordered region. Polar residues predominate over residues glutamate 342–threonine 357.

Belongs to the SVAP1 family. As to quaternary structure, forms a complex containing SNAP47, VAMP2 and STX1A. Associates with the BLOC-1 complex. Interacts with BLOC1S6.

The protein localises to the endomembrane system. It localises to the cytoplasm. The protein resides in the perinuclear region. In terms of biological role, may play a role in intracellular membrane fusion. This is Synaptosomal-associated protein 47 (SNAP47) from Bos taurus (Bovine).